The primary structure comprises 418 residues: Glutamyl-tRNA reductase (418 aa).

Substrate-binding positions include Thr-49 to Arg-52, Ser-109, Glu-114 to Gln-116, and Gln-120. Cys-50 (nucleophile) is an active-site residue. Gly-189–Ile-194 is an NADP(+) binding site.

The protein belongs to the glutamyl-tRNA reductase family. As to quaternary structure, homodimer.

The catalysed reaction is (S)-4-amino-5-oxopentanoate + tRNA(Glu) + NADP(+) = L-glutamyl-tRNA(Glu) + NADPH + H(+). It functions in the pathway porphyrin-containing compound metabolism; protoporphyrin-IX biosynthesis; 5-aminolevulinate from L-glutamyl-tRNA(Glu): step 1/2. Catalyzes the NADPH-dependent reduction of glutamyl-tRNA(Glu) to glutamate 1-semialdehyde (GSA). This is Glutamyl-tRNA reductase from Salmonella dublin (strain CT_02021853).